We begin with the raw amino-acid sequence, 305 residues long: GMP synthase [glutamine-hydrolyzing] subunit B (305 aa).

In terms of domain architecture, GMPS ATP-PPase spans 2 to 185 (VETEEFIAEA…LGLEEVISER (184 aa)). 29–35 (SGGVDSS) is an ATP binding site.

Heterodimer composed of a glutamine amidotransferase subunit (A) and a GMP-binding subunit (B).

It carries out the reaction XMP + L-glutamine + ATP + H2O = GMP + L-glutamate + AMP + diphosphate + 2 H(+). It participates in purine metabolism; GMP biosynthesis; GMP from XMP (L-Gln route): step 1/1. Functionally, catalyzes the synthesis of GMP from XMP. The protein is GMP synthase [glutamine-hydrolyzing] subunit B of Halorubrum lacusprofundi (strain ATCC 49239 / DSM 5036 / JCM 8891 / ACAM 34).